The sequence spans 456 residues: Bifunctional protein GlmU (456 aa).

Positions 1 to 229 (MLNNAMSVVI…LSEVEGVNNR (229 aa)) are pyrophosphorylase. Residues 11-14 (LAAG), K25, Q76, 81-82 (GT), 103-105 (YGD), G140, E154, N169, and N227 each bind UDP-N-acetyl-alpha-D-glucosamine. D105 is a Mg(2+) binding site. N227 contributes to the Mg(2+) binding site. The linker stretch occupies residues 230 to 250 (LQLSRLERVYQSEQAEKLLLA). The interval 251-456 (GVMLRDPARF…EGWRRPVKKK (206 aa)) is N-acetyltransferase. Residues R333 and K351 each contribute to the UDP-N-acetyl-alpha-D-glucosamine site. The Proton acceptor role is filled by H363. The UDP-N-acetyl-alpha-D-glucosamine site is built by Y366 and N377. Acetyl-CoA-binding positions include A380, 386 to 387 (NY), S405, A423, and R440.

The protein in the N-terminal section; belongs to the N-acetylglucosamine-1-phosphate uridyltransferase family. It in the C-terminal section; belongs to the transferase hexapeptide repeat family. As to quaternary structure, homotrimer. Requires Mg(2+) as cofactor.

The protein localises to the cytoplasm. The catalysed reaction is alpha-D-glucosamine 1-phosphate + acetyl-CoA = N-acetyl-alpha-D-glucosamine 1-phosphate + CoA + H(+). It carries out the reaction N-acetyl-alpha-D-glucosamine 1-phosphate + UTP + H(+) = UDP-N-acetyl-alpha-D-glucosamine + diphosphate. Its pathway is nucleotide-sugar biosynthesis; UDP-N-acetyl-alpha-D-glucosamine biosynthesis; N-acetyl-alpha-D-glucosamine 1-phosphate from alpha-D-glucosamine 6-phosphate (route II): step 2/2. The protein operates within nucleotide-sugar biosynthesis; UDP-N-acetyl-alpha-D-glucosamine biosynthesis; UDP-N-acetyl-alpha-D-glucosamine from N-acetyl-alpha-D-glucosamine 1-phosphate: step 1/1. It participates in bacterial outer membrane biogenesis; LPS lipid A biosynthesis. Catalyzes the last two sequential reactions in the de novo biosynthetic pathway for UDP-N-acetylglucosamine (UDP-GlcNAc). The C-terminal domain catalyzes the transfer of acetyl group from acetyl coenzyme A to glucosamine-1-phosphate (GlcN-1-P) to produce N-acetylglucosamine-1-phosphate (GlcNAc-1-P), which is converted into UDP-GlcNAc by the transfer of uridine 5-monophosphate (from uridine 5-triphosphate), a reaction catalyzed by the N-terminal domain. The chain is Bifunctional protein GlmU from Shigella dysenteriae serotype 1 (strain Sd197).